The chain runs to 430 residues: Enolase (430 aa).

Gln-167 contacts (2R)-2-phosphoglycerate. Glu-209 acts as the Proton donor in catalysis. The Mg(2+) site is built by Asp-245, Glu-286, and Asp-313. Lys-338, Arg-367, Ser-368, and Lys-389 together coordinate (2R)-2-phosphoglycerate. Lys-338 acts as the Proton acceptor in catalysis.

It belongs to the enolase family. Mg(2+) is required as a cofactor.

Its subcellular location is the cytoplasm. The protein localises to the secreted. It is found in the cell surface. It catalyses the reaction (2R)-2-phosphoglycerate = phosphoenolpyruvate + H2O. It functions in the pathway carbohydrate degradation; glycolysis; pyruvate from D-glyceraldehyde 3-phosphate: step 4/5. In terms of biological role, catalyzes the reversible conversion of 2-phosphoglycerate (2-PG) into phosphoenolpyruvate (PEP). It is essential for the degradation of carbohydrates via glycolysis. The chain is Enolase from Synechococcus sp. (strain CC9902).